A 143-amino-acid chain; its full sequence is Sarcoplasmic/endoplasmic reticulum calcium ATPase (143 aa).

It belongs to the cation transport ATPase (P-type) (TC 3.A.3) family. Type IIA subfamily.

It is found in the endoplasmic reticulum membrane. It localises to the sarcoplasmic reticulum membrane. The enzyme catalyses Ca(2+)(in) + ATP + H2O = Ca(2+)(out) + ADP + phosphate + H(+). This magnesium-dependent enzyme catalyzes the hydrolysis of ATP coupled with the transport of calcium. Transports calcium ions from the cytosol into the sarcoplasmic/endoplasmic reticulum lumen. Contributes to calcium sequestration involved in muscular excitation/contraction. This Chionoecetes opilio (Atlantic snow crab) protein is Sarcoplasmic/endoplasmic reticulum calcium ATPase.